A 225-amino-acid chain; its full sequence is Orotate phosphoribosyltransferase (225 aa).

5-phospho-alpha-D-ribose 1-diphosphate is bound by residues K26, 73 to 74, R100, K101, K104, H106, and 127 to 135; these read YK and EDVTTAGTS. 2 residues coordinate orotate: T131 and R160.

The protein belongs to the purine/pyrimidine phosphoribosyltransferase family. PyrE subfamily. In terms of assembly, homodimer. It depends on Mg(2+) as a cofactor.

The catalysed reaction is orotidine 5'-phosphate + diphosphate = orotate + 5-phospho-alpha-D-ribose 1-diphosphate. It participates in pyrimidine metabolism; UMP biosynthesis via de novo pathway; UMP from orotate: step 1/2. Catalyzes the transfer of a ribosyl phosphate group from 5-phosphoribose 1-diphosphate to orotate, leading to the formation of orotidine monophosphate (OMP). This chain is Orotate phosphoribosyltransferase, found in Lachnoclostridium phytofermentans (strain ATCC 700394 / DSM 18823 / ISDg) (Clostridium phytofermentans).